A 159-amino-acid chain; its full sequence is Protein Smg homolog (159 aa).

This sequence belongs to the Smg family.

The sequence is that of Protein Smg homolog from Vibrio campbellii (strain ATCC BAA-1116).